The chain runs to 375 residues: Putative monooxygenase Rv1533 (375 aa).

FMN-binding positions include Gln-190, Gly-195, Gly-224, and Trp-243–Ser-246.

The protein belongs to the nitronate monooxygenase family. FMN is required as a cofactor.

The chain is Putative monooxygenase Rv1533 from Mycobacterium tuberculosis (strain ATCC 25618 / H37Rv).